The following is a 230-amino-acid chain: Phosphoribosylformylglycinamidine synthase subunit PurQ (230 aa).

Positions 3–230 constitute a Glutamine amidotransferase type-1 domain; that stretch reads SAIIVFPGTN…LFQSIVESLS (228 aa). The active-site Nucleophile is the Cys87. Active-site residues include His204 and Glu206.

As to quaternary structure, part of the FGAM synthase complex composed of 1 PurL, 1 PurQ and 2 PurS subunits.

The protein resides in the cytoplasm. It carries out the reaction N(2)-formyl-N(1)-(5-phospho-beta-D-ribosyl)glycinamide + L-glutamine + ATP + H2O = 2-formamido-N(1)-(5-O-phospho-beta-D-ribosyl)acetamidine + L-glutamate + ADP + phosphate + H(+). It catalyses the reaction L-glutamine + H2O = L-glutamate + NH4(+). Its pathway is purine metabolism; IMP biosynthesis via de novo pathway; 5-amino-1-(5-phospho-D-ribosyl)imidazole from N(2)-formyl-N(1)-(5-phospho-D-ribosyl)glycinamide: step 1/2. Functionally, part of the phosphoribosylformylglycinamidine synthase complex involved in the purines biosynthetic pathway. Catalyzes the ATP-dependent conversion of formylglycinamide ribonucleotide (FGAR) and glutamine to yield formylglycinamidine ribonucleotide (FGAM) and glutamate. The FGAM synthase complex is composed of three subunits. PurQ produces an ammonia molecule by converting glutamine to glutamate. PurL transfers the ammonia molecule to FGAR to form FGAM in an ATP-dependent manner. PurS interacts with PurQ and PurL and is thought to assist in the transfer of the ammonia molecule from PurQ to PurL. The chain is Phosphoribosylformylglycinamidine synthase subunit PurQ from Rhodospirillum rubrum (strain ATCC 11170 / ATH 1.1.1 / DSM 467 / LMG 4362 / NCIMB 8255 / S1).